Here is a 157-residue protein sequence, read N- to C-terminus: UPF0254 protein MTH_1148 (157 aa).

It belongs to the UPF0254 family.

This chain is UPF0254 protein MTH_1148, found in Methanothermobacter thermautotrophicus (strain ATCC 29096 / DSM 1053 / JCM 10044 / NBRC 100330 / Delta H) (Methanobacterium thermoautotrophicum).